The sequence spans 356 residues: Arginine kinase Lit v 2.0101 (356 aa).

Residues 9-91 (KLEAGFKKLE…FDPIIEDYHV (83 aa)) enclose the Phosphagen kinase N-terminal domain. 64-68 (GVGIY) contributes to the L-arginine binding site. One can recognise a Phosphagen kinase C-terminal domain in the interval 119-356 (FVISTRVRCG…LELIKIEKEM (238 aa)). Residues 122–126 (STRVR) and histidine 185 contribute to the ATP site. Glutamate 225 serves as a coordination point for L-arginine. Residue arginine 229 participates in ATP binding. Residue cysteine 271 participates in L-arginine binding. Residues 280–284 (RASVH) and 309–314 (RGTRGE) each bind ATP. Glutamate 314 lines the L-arginine pocket.

This sequence belongs to the ATP:guanido phosphotransferase family. In terms of assembly, monomer. As to expression, muscle (at protein level).

It carries out the reaction L-arginine + ATP = N(omega)-phospho-L-arginine + ADP + H(+). It catalyses the reaction dTDP + ATP = dTTP + ADP. Functionally, catalyzes the reversible transfer of high energy ATP gamma-phosphate group to L-arginine. Has nucleoside diphosphate kinase-like activity toward dTDP. Binds and phosphorylates dTDP using ATP as a phosphate donor. Does not phosphorylate dADP, dCDP, dGDP, dTMP or thymidine. The sequence is that of Arginine kinase Lit v 2.0101 from Penaeus vannamei (Whiteleg shrimp).